The sequence spans 505 residues: Monocarboxylate transporter 6 (505 aa).

The Cytoplasmic segment spans residues 1–17 (MPQALERADGSWAWVVL). The helical transmembrane segment at 18-38 (LATMVTQGLTLGFPTCIGIFF) threads the bilayer. Topologically, residues 39-53 (TELQWEFQASNSETS) are extracellular. Residues 54 to 74 (WFPSILTAVLHMAGPLCSILV) traverse the membrane as a helical segment. Residues 75–80 (GRFGCR) lie on the Cytoplasmic side of the membrane. Residues 81 to 101 (VTVMLGGVLASLGMVASSFSH) traverse the membrane as a helical segment. Topologically, residues 102–110 (NLSQLYFTA) are extracellular. A helical transmembrane segment spans residues 111–131 (GFITGLGMCFSFQSSITVLGF). Residues 132–137 (YFVRRR) are Cytoplasmic-facing. A helical transmembrane segment spans residues 138 to 158 (VLANALASMGVSLGITLWPLL). Over 159-171 (SRYLLENLGWRGT) the chain is Extracellular. Residues 172–192 (FLVFGGIFLHCCICGAIIRPV) traverse the membrane as a helical segment. The Cytoplasmic portion of the chain corresponds to 193–239 (ATSVAPETKECPPPPPETPALGCLAACGRTIQRHLAFDILRHNTGYC). Residues 240 to 260 (VYILGVMWSVLGFPLPQVFLV) form a helical membrane-spanning segment. Residues 261 to 274 (PYAMWHSVDEQQAA) lie on the Extracellular side of the membrane. The chain crosses the membrane as a helical span at residues 275-295 (LLISIIGFSNIFLRPLAGLMA). The Cytoplasmic segment spans residues 296 to 305 (GRPAFASHRK). Residues 306–326 (YLFSLALLLNGLTNLVCAASG) traverse the membrane as a helical segment. The Extracellular portion of the chain corresponds to 327-329 (DFW). The helical transmembrane segment at 330-350 (VLVGYCLAYSVSMSGIGALIF) threads the bilayer. The Cytoplasmic portion of the chain corresponds to 351–367 (QVLMDIVPMDQFPRALG). The chain crosses the membrane as a helical span at residues 368–388 (LFTVLDGLAFLISPPLAGLLL). Residues 389–396 (DATNNFSY) are Extracellular-facing. Residues 397–417 (VFYMSSFFLISAALFMGGSFY) traverse the membrane as a helical segment. Residues 418 to 505 (ALQKKEQGKQ…QTALGWNSPT (88 aa)) lie on the Cytoplasmic side of the membrane. The tract at residues 443-464 (KDGPGKQRSPEIMCQSSRQPRP) is disordered.

Belongs to the major facilitator superfamily. Monocarboxylate porter (TC 2.A.1.13) family. As to expression, highly expressed in kidney.

The protein resides in the cell membrane. In terms of biological role, proton-linked monocarboxylate transporter. Catalyzes the rapid transport across the plasma membrane of many monocarboxylates such as lactate, pyruvate, branched-chain oxo acids derived from leucine, valine and isoleucine, and the ketone bodies acetoacetate, beta-hydroxybutyrate and acetate. This Homo sapiens (Human) protein is Monocarboxylate transporter 6 (SLC16A5).